The chain runs to 618 residues: UvrABC system protein C (618 aa).

A GIY-YIG domain is found at 13 to 92 (DKPGVYLMKN…IKKYRPKYNI (80 aa)). The UVR domain occupies 204–239 (LDIVENFKLNMEKAAENLEFEKAAMLRDKINIIEKI).

Belongs to the UvrC family. In terms of assembly, interacts with UvrB in an incision complex.

The protein resides in the cytoplasm. Functionally, the UvrABC repair system catalyzes the recognition and processing of DNA lesions. UvrC both incises the 5' and 3' sides of the lesion. The N-terminal half is responsible for the 3' incision and the C-terminal half is responsible for the 5' incision. The sequence is that of UvrABC system protein C from Clostridium botulinum (strain Kyoto / Type A2).